A 301-amino-acid chain; its full sequence is Probable alpha-L-glutamate ligase 1 (301 aa).

The region spanning M104–E287 is the ATP-grasp domain. ATP contacts are provided by residues K141, E178–Y179, D187, and R211–N213. D248, E260, and N262 together coordinate Mg(2+). Mn(2+) contacts are provided by D248, E260, and N262.

This sequence belongs to the RimK family. Mg(2+) serves as cofactor. Requires Mn(2+) as cofactor.

The sequence is that of Probable alpha-L-glutamate ligase 1 from Shewanella baltica (strain OS185).